The following is a 72-amino-acid chain: Small ribosomal subunit protein bS20 (72 aa).

Belongs to the bacterial ribosomal protein bS20 family.

Its function is as follows. Binds directly to 16S ribosomal RNA. This Aeromonas salmonicida protein is Small ribosomal subunit protein bS20 (rpsT).